The chain runs to 278 residues: tRNA (guanine-N(7)-)-methyltransferase (278 aa).

Positions 1–42 are disordered; that stretch reads MRHDGPMHVQPGVGLQSDTSSSTGTGSGPADEPEAEKSAWGY. Positions 106, 131, 160, and 183 each coordinate S-adenosyl-L-methionine. Asp-183 is an active-site residue. Substrate contacts are provided by residues Lys-187, Asp-219, and 256-259; that span reads TKYE.

Belongs to the class I-like SAM-binding methyltransferase superfamily. TrmB family.

It carries out the reaction guanosine(46) in tRNA + S-adenosyl-L-methionine = N(7)-methylguanosine(46) in tRNA + S-adenosyl-L-homocysteine. Its pathway is tRNA modification; N(7)-methylguanine-tRNA biosynthesis. Catalyzes the formation of N(7)-methylguanine at position 46 (m7G46) in tRNA. This Mycobacterium ulcerans (strain Agy99) protein is tRNA (guanine-N(7)-)-methyltransferase.